A 442-amino-acid polypeptide reads, in one-letter code: MYRNVTQEIFMEQTKIILDENEMPKRWYNVLSDLPSPIDPPLDPRTWQPINPEALEPIFAKELIRQEMSSDRYIDIPAEILDVYRLWRPSPLFRAHQLEKDLKTPAKIYYKYEGVSPAGSHKTNTSIAQAYYNMKEGTERLTTETGAGQWGSALSLACNYFDLECKVYMVRSSYYQKPYRKSLMTLWGGNVVPSPSPDTEFGRKILKEQPDTPGSLGIAISEAVEDAIAHDNTKYTLGSVLNHVVLHQTVIGAECKKQLEQVEEYPDVVIGCCGGGSNLGGIGLEFIKDRLEGKHNARVVAVEPSACPSLTKGEYRYDFGDTAEMTPLLKMYTLGHKHIPPAIHAGGLRYHGDSPIISKLCAEGLMEAVSYGQKEVFDAAVQFARTEGIVPAPESSHAIRCAIDEALEAKQKGEEKVILFNLSGHGHFDMASYDKYFSGELE.

K122 is subject to N6-(pyridoxal phosphate)lysine.

It belongs to the TrpB family. In terms of assembly, tetramer of two alpha and two beta chains. The cofactor is pyridoxal 5'-phosphate.

It carries out the reaction (1S,2R)-1-C-(indol-3-yl)glycerol 3-phosphate + L-serine = D-glyceraldehyde 3-phosphate + L-tryptophan + H2O. It participates in amino-acid biosynthesis; L-tryptophan biosynthesis; L-tryptophan from chorismate: step 5/5. In terms of biological role, the beta subunit is responsible for the synthesis of L-tryptophan from indole and L-serine. The polypeptide is Tryptophan synthase beta chain 2 (trpB2) (Methanosarcina mazei (strain ATCC BAA-159 / DSM 3647 / Goe1 / Go1 / JCM 11833 / OCM 88) (Methanosarcina frisia)).